Here is a 344-residue protein sequence, read N- to C-terminus: Ureide permease 3 (344 aa).

Residues 1 to 10 are Extracellular-facing; the sequence is MYVIESKGGT. Residues 11–31 traverse the membrane as a helical segment; sequence ITCMLLALLFLGTWPAIMTLT. Topologically, residues 32 to 42 are cytoplasmic; the sequence is ERRGRLPQHTY. The chain crosses the membrane as a helical span at residues 43 to 63; sequence LDYTLTNLLAAVIIAFTLGEI. Residues 64–78 lie on the Extracellular side of the membrane; the sequence is SPSRPNFTTQLSQDN. The helical transmembrane segment at 79 to 99 threads the bilayer; it reads WPSVMFAMAGGIFLSLGTLAT. Topologically, residues 100–101 are cytoplasmic; the sequence is QY. The chain crosses the membrane as a helical span at residues 102 to 122; the sequence is AWAFVGLSVTEVITASIAVVI. Topologically, residues 123 to 136 are extracellular; it reads GTTLNYFLDDRINR. Residues 137–157 form a helical membrane-spanning segment; sequence AEVLFPGVACFLIAVCFGSAV. The Cytoplasmic portion of the chain corresponds to 158–208; it reads HKSNAADNKSKLQGFKSLETTSSFQMETSSIKEGKAKVGTADFLIEVEKQR. 209 to 216 contacts ATP; sequence AIKVFGKS. A helical membrane pass occupies residues 209 to 229; it reads AIKVFGKSTIIGLAITFFAVP. The Extracellular segment spans residues 230–235; the sequence is KLNVYT. A helical membrane pass occupies residues 236–256; sequence AFFYFSISSFGVGLILNIIFL. Topologically, residues 257-278 are cytoplasmic; sequence YWPILGLPRSSFKAYLNDWNGR. Residues 279 to 299 traverse the membrane as a helical segment; the sequence is GWSFLAGFLCGFGNGLQFMGG. The Extracellular portion of the chain corresponds to 300 to 344; the sequence is QAAGYAAAGAVQIENKHFGGYCCLENTKDHQEKHIHFLSVCYLCS.

This sequence belongs to the plant ureide permease (TC 2.A.7.19) family.

The protein localises to the membrane. In terms of biological role, proton-coupled transporter that transports a wide spectrum of oxo derivatives of heterocyclic nitrogen compounds. In Arabidopsis thaliana (Mouse-ear cress), this protein is Ureide permease 3.